The chain runs to 514 residues: RNA-binding region-containing protein 3 (514 aa).

Residues 1-26 (MAGPEPPMPLSRGGPGSASLSPPRGD) are disordered. Ser21 carries the phosphoserine modification. The region spanning 27–102 (RTLLVRHLPA…HTLVVEFAKE (76 aa)) is the RRM 1 domain. 3 disordered regions span residues 106–133 (VHSP…EKKE), 213–282 (MPLH…VRKK), and 337–363 (ETQP…FGKI). The residue at position 108 (Ser108) is a Phosphoserine. Basic and acidic residues predominate over residues 115-133 (TEKKKRLDDTVENDKEKKE). Residues 217 to 230 (APLPPTSPQPPEEP) are compositionally biased toward pro residues. At Ser349 the chain carries Phosphoserine. One can recognise an RRM 2 domain in the interval 418 to 501 (CRIYVKNLAR…KPMVVQFARS (84 aa)).

Component of the U11/U12 snRNPs that are part of the U12-type spliceosome. Found in a complex with m(7)G-capped U12 snRNA. Interacts with PDCD7.

Its subcellular location is the nucleus. Its function is as follows. Participates in pre-mRNA U12-dependent splicing, performed by the minor spliceosome which removes U12-type introns. U12-type introns comprises less than 1% of all non-coding sequences. Binds to the 3'-stem-loop of m(7)G-capped U12 snRNA. This Mus musculus (Mouse) protein is RNA-binding region-containing protein 3 (Rnpc3).